The following is a 113-amino-acid chain: Cell cycle protein GpsB (113 aa).

Residues 37 to 63 (KDYETYATLVKSLRQEIADLKEELTRK) adopt a coiled-coil conformation. Residues 61-82 (TRKPQVSSAPSPSHPDPIDVAA) are disordered.

It belongs to the GpsB family. Forms polymers through the coiled coil domains. Interacts with PBP1, MreC and EzrA.

Its subcellular location is the cytoplasm. In terms of biological role, divisome component that associates with the complex late in its assembly, after the Z-ring is formed, and is dependent on DivIC and PBP2B for its recruitment to the divisome. Together with EzrA, is a key component of the system that regulates PBP1 localization during cell cycle progression. Its main role could be the removal of PBP1 from the cell pole after pole maturation is completed. Also contributes to the recruitment of PBP1 to the division complex. Not essential for septum formation. The polypeptide is Cell cycle protein GpsB (Streptococcus pneumoniae (strain ATCC 700669 / Spain 23F-1)).